A 93-amino-acid chain; its full sequence is UPF0521 protein A (93 aa).

The stretch at 2 to 58 forms a coiled coil; that stretch reads SLKEVITSLKNDFHSINKEIDSMKENNEKQEDKIFQEIKKLKLEMELLRKDNLSFKT.

This sequence belongs to the UPF0521 family.

This chain is UPF0521 protein A, found in Dictyostelium discoideum (Social amoeba).